The primary structure comprises 197 residues: Probable GTP-binding protein EngB (197 aa).

The EngB-type G domain occupies 22–195 (QLPELALAGR…WRTILNHLKV (174 aa)). Residues 30-37 (GRSNVGKS), 57-61 (GKTQT), 75-78 (DVPG), 142-145 (TKAD), and 174-176 (FSS) contribute to the GTP site. Mg(2+) is bound by residues Ser-37 and Thr-59.

The protein belongs to the TRAFAC class TrmE-Era-EngA-EngB-Septin-like GTPase superfamily. EngB GTPase family. Requires Mg(2+) as cofactor.

Its function is as follows. Necessary for normal cell division and for the maintenance of normal septation. In Shouchella clausii (strain KSM-K16) (Alkalihalobacillus clausii), this protein is Probable GTP-binding protein EngB.